The chain runs to 743 residues: Myb-related protein B (743 aa).

The segment at 1-29 is disordered; sequence MSRRSRGDDLEDLQYQDTDSDVPEPKENR. The span at 9 to 22 shows a compositional bias: acidic residues; sequence DLEDLQYQDTDSDV. 3 consecutive HTH myb-type domains span residues 26–77, 78–133, and 134–184; these read KENR…LRVL, HPDL…NPEV, and KKSS…KRKV. 3 consecutive DNA-binding regions (H-T-H motif) follow at residues 54–77, 106–129, and 157–180; these read WKTI…LRVL, WTLI…HNHL, and WAEI…NSTI. 2 disordered regions span residues 221–262 and 381–406; these read VERS…SESA and VTEN…TPVK.

Component of the DREAM complex.

The protein localises to the nucleus. This Xenopus laevis (African clawed frog) protein is Myb-related protein B (mybl2).